Here is a 353-residue protein sequence, read N- to C-terminus: Type 2 DNA topoisomerase 6 subunit A (353 aa).

Residues 2–138 (NRREIAINKL…LGLMPEEDGA (137 aa)) form the Topo IIA-type catalytic domain. Tyr-96 functions as the O-(5'-phospho-DNA)-tyrosine intermediate in the catalytic mechanism. Positions 186 and 238 each coordinate Mg(2+).

This sequence belongs to the TOP6A family. As to quaternary structure, homodimer. Heterotetramer of two Top6A and two Top6B chains. Mg(2+) serves as cofactor.

It carries out the reaction ATP-dependent breakage, passage and rejoining of double-stranded DNA.. Functionally, relaxes both positive and negative superturns and exhibits a strong decatenase activity. This chain is Type 2 DNA topoisomerase 6 subunit A, found in Methanothermobacter thermautotrophicus (strain ATCC 29096 / DSM 1053 / JCM 10044 / NBRC 100330 / Delta H) (Methanobacterium thermoautotrophicum).